Consider the following 172-residue polypeptide: Adenine phosphoribosyltransferase (172 aa).

This sequence belongs to the purine/pyrimidine phosphoribosyltransferase family. In terms of assembly, homodimer.

Its subcellular location is the cytoplasm. It catalyses the reaction AMP + diphosphate = 5-phospho-alpha-D-ribose 1-diphosphate + adenine. The protein operates within purine metabolism; AMP biosynthesis via salvage pathway; AMP from adenine: step 1/1. Functionally, catalyzes a salvage reaction resulting in the formation of AMP, that is energically less costly than de novo synthesis. The sequence is that of Adenine phosphoribosyltransferase from Prochlorococcus marinus (strain MIT 9303).